The primary structure comprises 292 residues: uncharacterized protein (292 aa).

A signal peptide spans 1 to 19 (MFKKYIFILLLLVTSIVKA). Residues 271-292 (KRNNPPLKTNNAKSKNPYDQSK) are disordered.

This is an uncharacterized protein from Rickettsia bellii (strain RML369-C).